Consider the following 506-residue polypeptide: UBX domain-containing protein 4 (506 aa).

An interaction with UBQLN1 region spans residues 1 to 199 (MLWFQGAIPA…PAEDLTVRVE (199 aa)). Over 1–411 (MLWFQGAIPA…VHSSSGDIWT (411 aa)) the chain is Cytoplasmic. The interval 110 to 194 (QQMHSSKGEA…CSNQRPAEDL (85 aa)) is disordered. Composition is skewed to polar residues over residues 120–136 (SVTN…TPSA) and 153–167 (LCET…SDTA). Residues 313-391 (DRSTIARIQF…ELAPSASVVL (79 aa)) enclose the UBX domain. The stretch at 412–432 (LLGTVLYPFLAIWRLISNFLF) is an intramembrane region. Topologically, residues 433 to 506 (SNPPPAQTSA…TWNGNSTQQM (74 aa)) are cytoplasmic. Positions 437–506 (PAQTSARATS…TWNGNSTQQM (70 aa)) are disordered. Residues 444–456 (ATSTEPSNSASSS) show a composition bias toward low complexity. Residues 457 to 489 (KSEKREPVRKRMLEKRGEDFKKEGKIYRLRTQD) are compositionally biased toward basic and acidic residues. The residue at position 487 (Thr487) is a Phosphothreonine. Polar residues predominate over residues 496–506 (NTWNGNSTQQM).

Directly interacts with VCP. Interacts with UBQLN1. Forms a complex with VCP and UBQLN1. As to expression, expressed in many tissues, including brain, heart, kidney, liver, muscle and spleen (at protein level).

The protein localises to the endoplasmic reticulum membrane. The protein resides in the nucleus envelope. Functionally, involved in endoplasmic reticulum-associated protein degradation (ERAD). Acts as a platform to recruit both UBQLN1 and VCP to the ER during ERAD. The protein is UBX domain-containing protein 4 (Ubxn4) of Mus musculus (Mouse).